Consider the following 280-residue polypeptide: Four and a half LIM domains protein 3 (280 aa).

Ser-2 bears the N-acetylserine mark. A C4-type zinc finger spans residues 7–31 (CAKCNESLYGRKYIQTDSGPYCVPC). LIM zinc-binding domains lie at 40–92 (CAEC…CNDC) and 101–153 (CSAC…CVPC). N6-acetyllysine is present on Lys-157. 2 LIM zinc-binding domains span residues 162 to 212 (CARC…CVAC) and 221 to 275 (CSSC…CQGC). Position 235 is an N6-acetyllysine (Lys-235).

In terms of assembly, interacts with SOX15; the interaction recruits FHL3 to FOXK1 promoters where it acts as a transcriptional coactivator of FOXK1. As to expression, expressed only in skeletal muscle.

The protein resides in the nucleus. It localises to the cytoplasm. Its function is as follows. Recruited by SOX15 to FOXK1 promoters where it acts as a transcriptional coactivator of FOXK1. The protein is Four and a half LIM domains protein 3 (FHL3) of Homo sapiens (Human).